The primary structure comprises 472 residues: Flotillin-like protein 6 (472 aa).

Cys37 is lipidated: S-palmitoyl cysteine. The stretch at 237-327 forms a coiled coil; the sequence is ENQREAEVAQ…ELYKKQKEAE (91 aa).

Belongs to the band 7/mec-2 family. Flotillin subfamily. Post-translationally, may be palmitoylated. Very low occasional expression in roots and nodules.

The protein resides in the cell membrane. It localises to the membrane. It is found in the caveola. May act as a scaffolding protein within caveolar membranes, functionally participating in formation of caveolae or caveolae-like vesicles. May be involved in nodule formation. The sequence is that of Flotillin-like protein 6 (FLOT6) from Medicago truncatula (Barrel medic).